Reading from the N-terminus, the 280-residue chain is MAVDIAMKFYLRSPPLRRDRVECRIARKSNEPLRPCIQTTDKTLLSELSNQENKVKKRVSFADSRGLALTMVKVYSDFDDELEIPFNISELIDNIVNLTTVEKERFVLDFVQPSADYLDFRNRLQADSVCLENCMLKDKALVGTVKVKNLAFQKCVKIRMTFDSWQTYTDYDCQYVKDTYAGSDKDTFSFDVSLPEGIQSNTRIEFAVYFECEGRIFWDSNKSLNYKIARQDHRIPSNFESRHYDPVCMSVDQYGSPRCSYGIFPELPTYSGFDKLGPYY.

Positions 58–61 match the PP1-binding motif motif; that stretch reads RVSF. Residues 121–229 enclose the CBM21 domain; that stretch reads RNRLQADSVC…SNKSLNYKIA (109 aa).

As to quaternary structure, interacts with glycogen, PPP1CC catalytic subunit of PP1 and PYGL. Associates with glycogen particles. Forms complexes with debranching enzyme, glycogen phosphorylase, glycogen synthase and phosphorylase kinase which is necessary for its regulation of PP1 activity.

Its function is as follows. Acts as a glycogen-targeting subunit for phosphatase PP1. Facilitates interaction of the PP1 with enzymes of the glycogen metabolism and regulates its activity. Suppresses the rate at which PP1 dephosphorylates (inactivates) glycogen phosphorylase and enhances the rate at which it activates glycogen synthase and therefore limits glycogen breakdown. The polypeptide is Protein phosphatase 1 regulatory subunit 3B-A (ppp1r3b-a) (Xenopus laevis (African clawed frog)).